Here is a 558-residue protein sequence, read N- to C-terminus: Membrane protein insertase YidC (558 aa).

5 consecutive transmembrane segments (helical) span residues 6 to 26 (SFFIIVFLIVSFILWKIWDDE), 359 to 379 (FIHTYTIDNWGISIILITVII), 434 to 454 (LGGCLPLLIQMPIFLALYYML), 480 to 500 (ILPIIMGITMFFIQKLSPTTI), and 513 to 533 (LVIFTIFFLWFPSGLVLYYII).

The protein belongs to the OXA1/ALB3/YidC family. Type 1 subfamily. As to quaternary structure, interacts with the Sec translocase complex via SecD. Specifically interacts with transmembrane segments of nascent integral membrane proteins during membrane integration.

The protein resides in the cell inner membrane. Its function is as follows. Required for the insertion and/or proper folding and/or complex formation of integral membrane proteins into the membrane. Involved in integration of membrane proteins that insert both dependently and independently of the Sec translocase complex, as well as at least some lipoproteins. Aids folding of multispanning membrane proteins. The sequence is that of Membrane protein insertase YidC from Blochmanniella floridana.